Reading from the N-terminus, the 452-residue chain is Protein CLT3, chloroplastic (452 aa).

The transit peptide at Met1–Arg34 directs the protein to the chloroplast. 10 helical membrane passes run Ala105–Tyr125, Phe137–Phe157, Pro175–Ala195, Thr202–Gly222, Ile230–Ala250, Gly258–Leu278, Phe307–Phe327, Gly353–Leu373, Thr389–Ala409, and Leu412–Trp432.

It belongs to the CRT-like transporter family.

Its subcellular location is the plastid. The protein resides in the chloroplast membrane. Involved in thiol transport from the plastid to the cytosol. Transports probably both glutathione (GSH) and its precursor, gamma-glutamylcysteine (gamma-EC). Exhibits some functional redundancy with CLT1 in maintaining the root GSH pool. The protein is Protein CLT3, chloroplastic of Arabidopsis thaliana (Mouse-ear cress).